A 728-amino-acid chain; its full sequence is Phosphoribosylformylglycinamidine synthase subunit PurL (728 aa).

H42 is an active-site residue. 2 residues coordinate ATP: Y45 and K84. E86 contributes to the Mg(2+) binding site. Residues 87–90 and R109 contribute to the substrate site; that span reads SHNH. Residue H88 is the Proton acceptor of the active site. Mg(2+) is bound at residue D110. Q237 lines the substrate pocket. Position 265 (D265) interacts with Mg(2+). Substrate is bound at residue 309 to 311; that stretch reads ESQ. D491 and G528 together coordinate ATP. N529 contributes to the Mg(2+) binding site. A substrate-binding site is contributed by S531.

This sequence belongs to the FGAMS family. As to quaternary structure, monomer. Part of the FGAM synthase complex composed of 1 PurL, 1 PurQ and 2 PurS subunits.

The protein localises to the cytoplasm. The enzyme catalyses N(2)-formyl-N(1)-(5-phospho-beta-D-ribosyl)glycinamide + L-glutamine + ATP + H2O = 2-formamido-N(1)-(5-O-phospho-beta-D-ribosyl)acetamidine + L-glutamate + ADP + phosphate + H(+). The protein operates within purine metabolism; IMP biosynthesis via de novo pathway; 5-amino-1-(5-phospho-D-ribosyl)imidazole from N(2)-formyl-N(1)-(5-phospho-D-ribosyl)glycinamide: step 1/2. Functionally, part of the phosphoribosylformylglycinamidine synthase complex involved in the purines biosynthetic pathway. Catalyzes the ATP-dependent conversion of formylglycinamide ribonucleotide (FGAR) and glutamine to yield formylglycinamidine ribonucleotide (FGAM) and glutamate. The FGAM synthase complex is composed of three subunits. PurQ produces an ammonia molecule by converting glutamine to glutamate. PurL transfers the ammonia molecule to FGAR to form FGAM in an ATP-dependent manner. PurS interacts with PurQ and PurL and is thought to assist in the transfer of the ammonia molecule from PurQ to PurL. This Campylobacter jejuni subsp. doylei (strain ATCC BAA-1458 / RM4099 / 269.97) protein is Phosphoribosylformylglycinamidine synthase subunit PurL.